A 588-amino-acid polypeptide reads, in one-letter code: MQEDGIAEPGLLLPRYPGDDTRPTNKKELLGWYSYGWAAEVFTVCAMGSFLPITLEQMARERGVLLSDKTTPCTAIWKTPESSNTSWQNSSPAAAGQCIVYILGAEINTASFAMYTFSVSVLIQAILIISMSGAADHGSYRKTLLVSFAAIGSICTMLILAVTPKVYLLGGLFAIVANTCLGASFVLLNSFLPLLVRYHPSLLKEESGYMVRSPTENSGQPIATDCFSNDDPRAALLQGDGMTPEDTREFISSSNTSKELTISTRISSYGIGIGYIGAVFLQGICILVIVQTRQTTFSLRLVLFLIGLWWFIFTIPAAFWLRPRPGPPLLRAQDGKAYQSWLGYMAYAWKSLGRTAMRTRHLKDILLFLASWFLLSDGIATVSGTAVLFAKTQLNMEPAALGMINVITMISGVFGAFSWSYVSRVLNLRASQTIIACIFLFELVPLYGLLGFIPAIKNLGFLGLQQPWEMFPLGVIYGLVMGGLSSYCRSFFGQLIPPGYEASFYSLYAITDKGSSVFGPAIVGFITDHYGEIRPAFFFLAILILLPLPLMLLVDADRGKRDALALAEVLEARSSLEQRDYGTFSQQQ.

The helical transmembrane segment at 35–55 (YGWAAEVFTVCAMGSFLPITL) threads the bilayer. Asn-84 carries an N-linked (GlcNAc...) asparagine glycan. 3 helical membrane passes run 109-129 (TASFAMYTFSVSVLIQAILII), 144-164 (LLVSFAAIGSICTMLILAVTP), and 168-188 (LLGGLFAIVANTCLGASFVLL). Asn-255 carries an N-linked (GlcNAc...) asparagine glycan. The next 8 helical transmembrane spans lie at 270–290 (GIGIGYIGAVFLQGICILVIV), 301–321 (LVLFLIGLWWFIFTIPAAFWL), 365–385 (ILLFLASWFLLSDGIATVSGT), 399–419 (AALGMINVITMISGVFGAFSW), 434–454 (IIACIFLFELVPLYGLLGFIP), 471–493 (FPLGVIYGLVMGGLSSYCRSFFG), 507–527 (LYAITDKGSSVFGPAIVGFIT), and 536–556 (AFFFLAILILLPLPLMLLVDA).

This sequence belongs to the ATG22 family.

It localises to the vacuole membrane. In terms of biological role, vacuolar effluxer which mediate the efflux of amino acids resulting from autophagic degradation. The release of autophagic amino acids allows the maintenance of protein synthesis and viability during nitrogen starvation. This chain is Autophagy-related protein 22-1 (atg22-1), found in Emericella nidulans (strain FGSC A4 / ATCC 38163 / CBS 112.46 / NRRL 194 / M139) (Aspergillus nidulans).